A 223-amino-acid polypeptide reads, in one-letter code: uncharacterized protein (223 aa).

2 helical membrane-spanning segments follow: residues Met1–Leu21 and Ile45–Ile65.

Its subcellular location is the cell membrane. This is an uncharacterized protein from Haemophilus influenzae (strain ATCC 51907 / DSM 11121 / KW20 / Rd).